Here is a 394-residue protein sequence, read N- to C-terminus: NAD(P)H-quinone oxidoreductase subunit H (394 aa).

It belongs to the complex I 49 kDa subunit family. In terms of assembly, NDH-1 can be composed of about 15 different subunits; different subcomplexes with different compositions have been identified which probably have different functions.

It localises to the cellular thylakoid membrane. The catalysed reaction is a plastoquinone + NADH + (n+1) H(+)(in) = a plastoquinol + NAD(+) + n H(+)(out). The enzyme catalyses a plastoquinone + NADPH + (n+1) H(+)(in) = a plastoquinol + NADP(+) + n H(+)(out). Functionally, NDH-1 shuttles electrons from an unknown electron donor, via FMN and iron-sulfur (Fe-S) centers, to quinones in the respiratory and/or the photosynthetic chain. The immediate electron acceptor for the enzyme in this species is believed to be plastoquinone. Couples the redox reaction to proton translocation, and thus conserves the redox energy in a proton gradient. Cyanobacterial NDH-1 also plays a role in inorganic carbon-concentration. The polypeptide is NAD(P)H-quinone oxidoreductase subunit H (Prochlorococcus marinus (strain SARG / CCMP1375 / SS120)).